We begin with the raw amino-acid sequence, 537 residues long: CTP synthase (537 aa).

The tract at residues 1–268 is amidoligase domain; sequence MPFKCIFLTG…ANFIGEKLKL (268 aa). S14 is a binding site for CTP. S14 contacts UTP. Residues 15–20 and D72 each bind ATP; that span reads SLGKGL. 2 residues coordinate Mg(2+): D72 and E142. Residues 149–151, 188–193, and K224 contribute to the CTP site; these read DIE and KSKPTQ. UTP-binding positions include 188-193 and K224; that span reads KSKPTQ. Residues 293 to 533 form the Glutamine amidotransferase type-1 domain; sequence KIGVVGKYVQ…IEAALVYSKD (241 aa). G352 contacts L-glutamine. C379 functions as the Nucleophile; for glutamine hydrolysis in the catalytic mechanism. L-glutamine is bound by residues 380–383, E403, and R461; that span reads LGMQ. Residues H506 and E508 contribute to the active site.

It belongs to the CTP synthase family. Homotetramer.

It carries out the reaction UTP + L-glutamine + ATP + H2O = CTP + L-glutamate + ADP + phosphate + 2 H(+). The catalysed reaction is L-glutamine + H2O = L-glutamate + NH4(+). It catalyses the reaction UTP + NH4(+) + ATP = CTP + ADP + phosphate + 2 H(+). The protein operates within pyrimidine metabolism; CTP biosynthesis via de novo pathway; CTP from UDP: step 2/2. Allosterically activated by GTP, when glutamine is the substrate; GTP has no effect on the reaction when ammonia is the substrate. The allosteric effector GTP functions by stabilizing the protein conformation that binds the tetrahedral intermediate(s) formed during glutamine hydrolysis. Inhibited by the product CTP, via allosteric rather than competitive inhibition. Functionally, catalyzes the ATP-dependent amination of UTP to CTP with either L-glutamine or ammonia as the source of nitrogen. Regulates intracellular CTP levels through interactions with the four ribonucleotide triphosphates. The polypeptide is CTP synthase (Chlamydia pneumoniae (Chlamydophila pneumoniae)).